Reading from the N-terminus, the 48-residue chain is VFRNRSSVLVEQHGKVLLQGQPIEVKTVVLDGVKAVRAKTVPAEKWEA.

This is an uncharacterized protein from Mus musculus domesticus (western European house mouse).